Here is a 402-residue protein sequence, read N- to C-terminus: Succinyl-diaminopimelate desuccinylase (402 aa).

Residue His88 participates in Zn(2+) binding. Asp90 is a catalytic residue. Position 121 (Asp121) interacts with Zn(2+). Catalysis depends on Glu155, which acts as the Proton acceptor. Positions 156, 184, and 374 each coordinate Zn(2+).

It belongs to the peptidase M20A family. DapE subfamily. As to quaternary structure, homodimer. It depends on Zn(2+) as a cofactor. The cofactor is Co(2+).

The enzyme catalyses N-succinyl-(2S,6S)-2,6-diaminopimelate + H2O = (2S,6S)-2,6-diaminopimelate + succinate. The protein operates within amino-acid biosynthesis; L-lysine biosynthesis via DAP pathway; LL-2,6-diaminopimelate from (S)-tetrahydrodipicolinate (succinylase route): step 3/3. Functionally, catalyzes the hydrolysis of N-succinyl-L,L-diaminopimelic acid (SDAP), forming succinate and LL-2,6-diaminopimelate (DAP), an intermediate involved in the bacterial biosynthesis of lysine and meso-diaminopimelic acid, an essential component of bacterial cell walls. The protein is Succinyl-diaminopimelate desuccinylase of Psychrobacter sp. (strain PRwf-1).